Here is a 142-residue protein sequence, read N- to C-terminus: MAAMTVHLDIVSAESKIFSGRVASLQVTGSEGELGIMHGHAPLLSYIKPGMARIVKQDGSEEVFYLSGGILEVQPSTVSVLADVVMRAKDIDEQAALEAKRRAEAHMANAGADFNYDAAMVELAKAMAQLRVVETIKKNIAR.

This sequence belongs to the ATPase epsilon chain family. F-type ATPases have 2 components, CF(1) - the catalytic core - and CF(0) - the membrane proton channel. CF(1) has five subunits: alpha(3), beta(3), gamma(1), delta(1), epsilon(1). CF(0) has three main subunits: a, b and c.

Its subcellular location is the cell inner membrane. In terms of biological role, produces ATP from ADP in the presence of a proton gradient across the membrane. In Shewanella baltica (strain OS185), this protein is ATP synthase epsilon chain.